The primary structure comprises 148 residues: Deoxyuridine 5'-triphosphate nucleotidohydrolase (148 aa).

Substrate-binding positions include R68–G70, N81, T85–D87, and K95.

The protein belongs to the dUTPase family. Requires Mg(2+) as cofactor.

The catalysed reaction is dUTP + H2O = dUMP + diphosphate + H(+). The protein operates within pyrimidine metabolism; dUMP biosynthesis; dUMP from dCTP (dUTP route): step 2/2. In terms of biological role, this enzyme is involved in nucleotide metabolism: it produces dUMP, the immediate precursor of thymidine nucleotides and it decreases the intracellular concentration of dUTP so that uracil cannot be incorporated into DNA. In Rickettsia prowazekii (strain Madrid E), this protein is Deoxyuridine 5'-triphosphate nucleotidohydrolase.